The chain runs to 414 residues: Eukaryotic initiation factor 4A-3 (414 aa).

The Q motif signature appears at 41-69; the sequence is ESFDDMGLQENLLRGIYAYGFEKPSAIQQ. Residues 72-242 enclose the Helicase ATP-binding domain; sequence IVPFCKGLDV…RKFMNKPVRI (171 aa). 85 to 92 lines the ATP pocket; sequence AQSGTGKT. Residues 190-193 carry the DEAD box motif; it reads DEAD. In terms of domain architecture, Helicase C-terminal spans 253-414; the sequence is GIKQFYVNVE…ELPANVADLL (162 aa).

It belongs to the DEAD box helicase family. eIF4A subfamily. In terms of assembly, eIF4F is a multi-subunit complex, the composition of which varies with external and internal environmental conditions. It is composed of at least EIF4A, EIF4E and EIF4G. Interacts with DRM2 (via UBA domains).

It is found in the cytoplasm. It localises to the nucleus. It catalyses the reaction ATP + H2O = ADP + phosphate + H(+). In terms of biological role, ATP-dependent RNA helicase which is a subunit of the eIF4F complex involved in cap recognition and is required for mRNA binding to ribosome. In the current model of translation initiation, eIF4A unwinds RNA secondary structures in the 5'-UTR of mRNAs which is necessary to allow efficient binding of the small ribosomal subunit, and subsequent scanning for the initiator codon. The sequence is that of Eukaryotic initiation factor 4A-3 from Oryza sativa subsp. japonica (Rice).